Reading from the N-terminus, the 398-residue chain is Tryptophan synthase beta chain (398 aa).

Lys-90 carries the post-translational modification N6-(pyridoxal phosphate)lysine.

It belongs to the TrpB family. As to quaternary structure, tetramer of two alpha and two beta chains. Pyridoxal 5'-phosphate serves as cofactor.

The catalysed reaction is (1S,2R)-1-C-(indol-3-yl)glycerol 3-phosphate + L-serine = D-glyceraldehyde 3-phosphate + L-tryptophan + H2O. The protein operates within amino-acid biosynthesis; L-tryptophan biosynthesis; L-tryptophan from chorismate: step 5/5. In terms of biological role, the beta subunit is responsible for the synthesis of L-tryptophan from indole and L-serine. The protein is Tryptophan synthase beta chain of Anoxybacillus flavithermus (strain DSM 21510 / WK1).